The sequence spans 120 residues: Large ribosomal subunit protein eL8 (120 aa).

This sequence belongs to the eukaryotic ribosomal protein eL8 family. As to quaternary structure, part of the 50S ribosomal subunit. Probably part of the RNase P complex.

It localises to the cytoplasm. Its function is as follows. Multifunctional RNA-binding protein that recognizes the K-turn motif in ribosomal RNA, the RNA component of RNase P, box H/ACA, box C/D and box C'/D' sRNAs. The chain is Large ribosomal subunit protein eL8 from Halorubrum lacusprofundi (strain ATCC 49239 / DSM 5036 / JCM 8891 / ACAM 34).